We begin with the raw amino-acid sequence, 352 residues long: Nuclear receptor subfamily 1 group I member 3 (352 aa).

The segment at residues 8–83 is a DNA-binding region (nuclear receptor); sequence LRNCVVCGDQ…AGMRKDMILS (76 aa). An NR C4-type zinc finger spans residues 11–31; that stretch reads CVVCGDQATGYHFNALTCEGC. Position 38 is a phosphothreonine; by PKC (T38). The NR C4-type zinc finger occupies 47-71; it reads CPFAGSCEVSKTQRRHCPACRLQKC. One can recognise an NR LBD domain in the interval 109 to 352; sequence EQEELIRTLL…MMPLLQEICS (244 aa).

The protein belongs to the nuclear hormone receptor family. NR1 subfamily. In terms of assembly, interacts with ECT2. Heterodimer of NR1I3 and RXR. Interacts with PSMC4. Directly interacts with DNAJC7. The DNAJC7-NR1I3 complex may also include HSP90. Interacts with CRY1. Interacts with CRY2 in a ligand-dependent manner. Post-translationally, phosphorylated at Thr-38 by PKC, dephosphorylation of Thr-38 is required for nuclear translocation and activation. In terms of tissue distribution, predominantly expressed in liver.

It is found in the nucleus. The protein resides in the cytoplasm. It localises to the cytoskeleton. Functionally, binds and transactivates the retinoic acid response elements that control expression of the retinoic acid receptor beta 2 and alcohol dehydrogenase 3 genes. Transactivates both the phenobarbital responsive element module of the human CYP2B6 gene and the CYP3A4 xenobiotic response element. The polypeptide is Nuclear receptor subfamily 1 group I member 3 (NR1I3) (Homo sapiens (Human)).